The sequence spans 426 residues: MKLQKPKGTQDILPGDSAKWQYVENVARETFKKYNYGEIRTPMFEHYEVISRSVGDTTDIVTKEMYDFHDKGDRHITLRPEGTAPVVRSYVENKLFAPEVQKPVKVYYIGSMFRYERPQAGRLREFHQLGVECFGSKNPATDVETIAMAYQLFNTLGIKDVTLHLNSLGNTDSRLAYRQALIDYLTPMRESLSKDSQRRLEENPLRVLDSKEKEDKVAVENAPSILDYLDEESQTHFDEVRAMLDSLNIPYVIDTNMVRGLDYYNHTIFEFITTIDKSELTICAGGRYDSLVEYFGGPETAGFGFGLGLERLLLVLDKQGIKLPVEESLDVYIAVLGSGANGKALELVQSIRYQGFKAERDYLGRKIKAQFKSADTFKAKTVITLGESEVESGVVKVKNNATREEVTVSFEELTTNFATVLKQLEK.

Belongs to the class-II aminoacyl-tRNA synthetase family. Homodimer.

It localises to the cytoplasm. It catalyses the reaction tRNA(His) + L-histidine + ATP = L-histidyl-tRNA(His) + AMP + diphosphate + H(+). This chain is Histidine--tRNA ligase, found in Streptococcus thermophilus (strain ATCC BAA-491 / LMD-9).